The chain runs to 154 residues: Aspartate carbamoyltransferase regulatory chain (154 aa).

Cys109, Cys114, Cys138, and Cys141 together coordinate Zn(2+).

The protein belongs to the PyrI family. Contains catalytic and regulatory chains. The cofactor is Zn(2+).

In terms of biological role, involved in allosteric regulation of aspartate carbamoyltransferase. This is Aspartate carbamoyltransferase regulatory chain from Photorhabdus laumondii subsp. laumondii (strain DSM 15139 / CIP 105565 / TT01) (Photorhabdus luminescens subsp. laumondii).